A 662-amino-acid polypeptide reads, in one-letter code: MSTTTTEARSPLPLLLRRGRSSTALSASTAEARSPLSILQFRRRSSKDVRNITSVSSSLLPAFGTFIEDDNPSSKPFIVLHFDRRYRLWELFLVILVGYSAWASLFELAFEKAAEGALLTIDLVVDFFFAVDIILTFFVSYLDNTTYLNVTDHKLIAKRYLKSVAFVMDVASTLPIQFIYKTITGDVGRGQAFGFLNLLRLWRLRRVAELFKRLEKDAHFNYFVIRVIKLLCVTIFWIHLAGCILYWIAYHYPRPTDTWIGSQVEDFKERSVWLGYTYSMYWSIVTLTTVGYGDLHAVNSREKTFNMFYMLFNIGLTSYIIGIMTNLVVHGALRTFAMRSAINDILRYTSKNRLPDTMREQMLAHMQLKFKTAELRQEEVLQDLPKAIRSSINQHLFRSIIEEAYLFKGFPEGLLVQLVSQIQAEYFPPKMEIILQNEIPTDFYVIVSGGVDIIASKGVSEQVLAKLGPGSMAGEIGVVFNIPQPFTVRTRRLSQVIRIGHHKFKEMVQSDNDVDAKMIIANFMTYLKGLNDELKKEIPFLRDLLDDADAQVQETVQSEETPQSNDEEIVTVSRHENGQIEERRREGVPKRVIIHGQAPPNQDNKNNGDSNGRLIILPDSIQLLFDLAEKKLGKRGSTIAMADGAHVEQIDALRENDHLYIF.

The Cytoplasmic portion of the chain corresponds to 1–90 (MSTTTTEARS…HFDRRYRLWE (90 aa)). Residues 91–111 (LFLVILVGYSAWASLFELAFE) form a helical membrane-spanning segment. Topologically, residues 112-118 (KAAEGAL) are extracellular. The helical transmembrane segment at 119–139 (LTIDLVVDFFFAVDIILTFFV) threads the bilayer. Over 140–163 (SYLDNTTYLNVTDHKLIAKRYLKS) the chain is Cytoplasmic. Residues 164-184 (VAFVMDVASTLPIQFIYKTIT) traverse the membrane as a helical segment. Over 185-194 (GDVGRGQAFG) the chain is Extracellular. The helical; Voltage-sensor transmembrane segment at 195-215 (FLNLLRLWRLRRVAELFKRLE) threads the bilayer. The Cytoplasmic segment spans residues 216 to 229 (KDAHFNYFVIRVIK). A helical membrane pass occupies residues 230 to 250 (LLCVTIFWIHLAGCILYWIAY). The Extracellular portion of the chain corresponds to 251–277 (HYPRPTDTWIGSQVEDFKERSVWLGYT). Positions 278 to 297 (YSMYWSIVTLTTVGYGDLHA) form an intramembrane region, pore-forming. The Extracellular portion of the chain corresponds to 298–301 (VNSR). The chain crosses the membrane as a helical span at residues 302-322 (EKTFNMFYMLFNIGLTSYIIG). Residues 323-662 (IMTNLVVHGA…LRENDHLYIF (340 aa)) are Cytoplasmic-facing. A nucleoside 3',5'-cyclic phosphate is bound at residue 406-527 (LFKGFPEGLL…MIIANFMTYL (122 aa)). The stretch at 528–558 (KGLNDELKKEIPFLRDLLDDADAQVQETVQS) forms a coiled coil. The KHA domain maps to 591–662 (RVIIHGQAPP…LRENDHLYIF (72 aa)).

The protein belongs to the potassium channel family. Plant (TC 1.A.1.4) subfamily. In terms of assembly, the potassium channel is probably composed of a homo- or heterotetrameric complex of pore-forming subunits. May interact with AKT1 and AKT2. Interacts with SLAC1. In terms of tissue distribution, expressed predominantly in root hairs and root endodermis and, at a lower level, in leaf nodes, trichomes, and hydathodes.

It is found in the membrane. In terms of biological role, probable modulatory (alpha) subunit of inward-rectifying potassium channels. Could mediate potassium uptake from the soil solution by plant roots in association with AKT1. The polypeptide is Potassium channel KAT3 (KAT3) (Arabidopsis thaliana (Mouse-ear cress)).